We begin with the raw amino-acid sequence, 289 residues long: Zinc finger matrin-type protein 3 (289 aa).

2 consecutive Matrin-type zinc fingers follow at residues 70–100 (LFCKLCNVTLNSAQQAQAHYQGKNHGKKLRN) and 147–177 (DYCKLCDASFSSPAVAQAHYQGKNHAKRLRL). Disordered regions lie at residues 180–202 (AQSHSFSDSAEAGQRRTRKEGSE) and 265–289 (ESKQHKSKVSEQRYRSEMENLGYVQ). The segment at 245–275 (FYCSMCNVGAGEEVEFRQHLESKQHKSKVSE) adopts a Matrin-type 3 zinc-finger fold. Positions 265-282 (ESKQHKSKVSEQRYRSEM) are enriched in basic and acidic residues.

In terms of assembly, interacts with dsRNA. As to expression, highly expressed in brain, gut, lung, and testis.

It is found in the nucleus. Its subcellular location is the nucleolus. Its function is as follows. Acts as a bona fide target gene of p53/TP53. May play a role in the TP53-dependent growth regulatory pathway. May contribute to TP53-mediated apoptosis by regulation of TP53 expression and translocation to the nucleus and nucleolus. This Rattus norvegicus (Rat) protein is Zinc finger matrin-type protein 3.